The primary structure comprises 1633 residues: D-lysergyl-peptide-synthetase subunit 3 (1633 aa).

Positions 80 to 483 (FRQRCDLHPD…GRKDSQIKIR (404 aa)) are adenylation (A) domain. One can recognise a Carrier domain in the interval 622-691 (EEHRLQRMYS…RLKDLARKAS (70 aa)). Ser-654 is modified (O-(pantetheine 4'-phosphoryl)serine). The tract at residues 836–1127 (PLVRMKLVEG…ILGQIHGKEA (292 aa)) is condensation (C) domain. The reductase (R) domain stretch occupies residues 1256-1483 (VTGASGFIGT…EYNSSAGSEW (228 aa)).

Belongs to the NRP synthetase family.

Its pathway is alkaloid biosynthesis; ergot alkaloid biosynthesis. Its function is as follows. D-lysergyl-peptide-synthetase subunit 3; part of the gene cluster that mediates the biosynthesis of fungal ergot alkaloid. DmaW catalyzes the first step of ergot alkaloid biosynthesis by condensing dimethylallyl diphosphate (DMAP) and tryptophan to form 4-dimethylallyl-L-tryptophan. The second step is catalyzed by the methyltransferase easF that methylates 4-dimethylallyl-L-tryptophan in the presence of S-adenosyl-L-methionine, resulting in the formation of 4-dimethylallyl-L-abrine. The catalase easC and the FAD-dependent oxidoreductase easE then transform 4-dimethylallyl-L-abrine to chanoclavine-I which is further oxidized by easD in the presence of NAD(+), resulting in the formation of chanoclavine-I aldehyde. Agroclavine dehydrogenase easG then mediates the conversion of chanoclavine-I aldehyde to agroclavine via a non-enzymatic adduct reaction: the substrate is an iminium intermediate that is formed spontaneously from chanoclavine-I aldehyde in the presence of glutathione. The presence of easA is not required to complete this reaction. Further conversion of agroclavine to paspalic acid is a two-step process involving oxidation of agroclavine to elymoclavine and of elymoclavine to paspalic acid, the second step being performed by the elymoclavine oxidase cloA. Paspalic acid is then further converted to D-lysergic acid. Ergopeptines are assembled from D-lysergic acid and three different amino acids by the D-lysergyl-peptide-synthetases composed each of a monomudular and a trimodular nonribosomal peptide synthetase subunit. LpsB and lpsC encode the monomodular subunits responsible for D-lysergic acid activation and incorporation into the ergopeptine backbone. LpsA1 and A2 subunits encode the trimodular nonribosomal peptide synthetase assembling the tripeptide portion of ergopeptines. LpsA1 is responsible for formation of the major ergopeptine, ergotamine, and lpsA2 for alpha-ergocryptine, the minor ergopeptine of the total alkaloid mixture elaborated by C.purpurea. D-lysergyl-tripeptides are assembled by the nonribosomal peptide synthetases and released as N-(D-lysergyl-aminoacyl)-lactams. Cyclolization of the D-lysergyl-tripeptides is performed by the Fe(2+)/2-ketoglutarate-dependent dioxygenase easH which introduces a hydroxyl group into N-(D-lysergyl-aminoacyl)-lactam at alpha-C of the aminoacyl residue followed by spontaneous condensation with the terminal lactam carbonyl group. In Claviceps purpurea (Ergot fungus), this protein is D-lysergyl-peptide-synthetase subunit 3.